A 149-amino-acid chain; its full sequence is Nucleoside diphosphate kinase (149 aa).

6 residues coordinate ATP: K9, F57, R85, T91, R102, and N112. H115 functions as the Pros-phosphohistidine intermediate in the catalytic mechanism.

Belongs to the NDK family. Homotetramer. The cofactor is Mg(2+).

The protein resides in the cytoplasm. It catalyses the reaction a 2'-deoxyribonucleoside 5'-diphosphate + ATP = a 2'-deoxyribonucleoside 5'-triphosphate + ADP. The enzyme catalyses a ribonucleoside 5'-diphosphate + ATP = a ribonucleoside 5'-triphosphate + ADP. In terms of biological role, major role in the synthesis of nucleoside triphosphates other than ATP. The ATP gamma phosphate is transferred to the NDP beta phosphate via a ping-pong mechanism, using a phosphorylated active-site intermediate. The polypeptide is Nucleoside diphosphate kinase (Synechocystis sp. (strain ATCC 27184 / PCC 6803 / Kazusa)).